We begin with the raw amino-acid sequence, 621 residues long: Chaperone protein DnaK (621 aa).

T179 carries the phosphothreonine; by autocatalysis modification. Positions 583 to 605 (SQVQDTQGAAQGQSQGNPQQTAD) are enriched in polar residues. The segment at 583 to 621 (SQVQDTQGAAQGQSQGNPQQTADNRGKVVDAEIVDENKE) is disordered. Residues 606-621 (NRGKVVDAEIVDENKE) show a composition bias toward basic and acidic residues.

Belongs to the heat shock protein 70 family.

Its function is as follows. Acts as a chaperone. This Endomicrobium trichonymphae protein is Chaperone protein DnaK.